The sequence spans 62 residues: Large ribosomal subunit protein bL28 (62 aa).

Belongs to the bacterial ribosomal protein bL28 family.

The polypeptide is Large ribosomal subunit protein bL28 (Helicobacter pylori (strain Shi470)).